The primary structure comprises 72 residues: Small ribosomal subunit protein eS31 (72 aa).

Residues Cys32, Cys35, Cys51, and Cys54 each contribute to the Zn(2+) site. The segment at 32-54 (CPRCGSVMAYHKEPVPRWHCGKC) adopts a C4-type zinc-finger fold.

Belongs to the eukaryotic ribosomal protein eS31 family. As to quaternary structure, part of the 30S ribosomal subunit. Requires Zn(2+) as cofactor.

The protein is Small ribosomal subunit protein eS31 of Caldivirga maquilingensis (strain ATCC 700844 / DSM 13496 / JCM 10307 / IC-167).